A 408-amino-acid polypeptide reads, in one-letter code: Inhibin beta B chain (408 aa).

Positions 1–28 are cleaved as a signal peptide; it reads MDGLPGRALGAACLLMLAVGSLGPGVWG. Residues 29–60 are disordered; sequence SPTPPPLPAAPQPPPPPPGAPGGSQDTCTSCG. Positions 29–293 are excised as a propeptide; sequence SPTPPPLPAA…GDSRHRIRKR (265 aa). Residues 30-48 are compositionally biased toward pro residues; the sequence is PTPPPLPAAPQPPPPPPGA. Residue N94 is glycosylated (N-linked (GlcNAc...) asparagine). Cystine bridges form between C297–C305, C304–C373, C333–C405, and C337–C407.

This sequence belongs to the TGF-beta family. Dimeric, linked by one or more disulfide bonds. Inhibin B is a dimer of alpha and beta-B. Activin B is a homodimer of beta-B. Activin AB is a dimer of beta-A and beta-B. Interacts with FST and FSTL3.

It is found in the secreted. Functionally, inhibins and activins inhibit and activate, respectively, the secretion of follitropin by the pituitary gland. Inhibins/activins are involved in regulating a number of diverse functions such as hypothalamic and pituitary hormone secretion, gonadal hormone secretion, germ cell development and maturation, erythroid differentiation, insulin secretion, nerve cell survival, embryonic axial development or bone growth, depending on their subunit composition. Inhibins appear to oppose the functions of activins. Its function is as follows. Activin B is a dimer of alpha and beta-B that plays a role in several essential biological processes including embryonic development, stem cell maintenance and differentiation, haematopoiesis, cell proliferation and wound healing. Signals through type I receptor ACVR1C, abundantly expressed in pancreatic beta cells, and type II receptors like ACVR2A. Upon ligand binding, these receptors phosphorylate intracellular signaling mediators SMAD2 and SMAD3, which form a complex with SMAD4, translocate to the nucleus, and regulate gene expression. Plays a crucial role in the induction of hepcidin by inflammation through activation of ACVR1C and subsequent phosphorylation of SMAD1/5/8. Regulates adipocyte lipid metabolism by decreasing non-esterified fatty acids and glycerol release and increases intracellular triglyceride content. Stimulates wound healing by promoting cell migration and hair follicle regeneration through the JNK and ERK signaling pathways downstream of RHOA. Inhibin B is a dimer of alpha and beta-B that plays a crucial role in the regulation of the reproductive system by inhibiting the secretion of follicle-stimulating hormone (FSH) from the anterior pituitary gland. Thereby, maintains reproductive homeostasis in both males and females. Acts as a more potent suppressor of FSH release than inhibin A. Functions as competitive receptor antagonist binding activin type II receptors with high affinity in the presence of the TGF-beta type III coreceptor/TGFBR3L. The sequence is that of Inhibin beta B chain (INHBB) from Bos taurus (Bovine).